Reading from the N-terminus, the 486-residue chain is Solute carrier family 2, facilitated glucose transporter member 5 (486 aa).

N-acetylmethionine is present on Met1. Topologically, residues 1 to 19 (MEQEGQEKKKEGRLTLVLA) are cytoplasmic. The chain crosses the membrane as a helical span at residues 20–40 (LRTLIAAFGSSFQYAYNVSVC). Tyr33 contributes to the D-fructose binding site. Residues 41–69 (NSPSELMTEFYNDTYYDRTGELIDEFPLT) are Extracellular-facing. Residue Asn52 is glycosylated (N-linked (GlcNAc...) asparagine). The chain crosses the membrane as a helical span at residues 70–92 (LLWSVTVSMFPSGGFAGSLLVGP). Topologically, residues 93–99 (LVNKFGR) are cytoplasmic. A helical transmembrane segment spans residues 100-120 (KGALLFNNIFSIVPAILMGCS). The Extracellular portion of the chain corresponds to 121–127 (KVARSFE). Residues 128–150 (LIIISRLLVGICAGVSSNVVPMY) form a helical membrane-spanning segment. The Cytoplasmic segment spans residues 151–162 (LGELAPKNLRGA). A helical membrane pass occupies residues 163–183 (LGVESQLFITLGILVAQIFGL). Gln168 contacts D-fructose. The Extracellular portion of the chain corresponds to 184 to 192 (RSIRQQKGW). Residues 193 to 211 (PILLGLTGGPAAAACPPFF) traverse the membrane as a helical segment. Residues 212–274 (PESPRYLLIG…LCAMRGLAWQ (63 aa)) are Cytoplasmic-facing. The chain crosses the membrane as a helical span at residues 275-294 (LISVVPLMWQQLSGVNAIYY). D-fructose contacts are provided by residues Gln284 and 292 to 294 (IYY). The Extracellular segment spans residues 295-306 (YDQIYLSPLDTD). Residues 307–327 (TQYYTAATGAVNVLMTVCTVF) traverse the membrane as a helical segment. Residues 328–334 (VVESWAR) lie on the Cytoplasmic side of the membrane. Residues 335–355 (LLLLLGFSPLAPTCCVLTAAL) traverse the membrane as a helical segment. At 356 to 363 (ALQDTVSW) the chain is on the extracellular side. A helical membrane pass occupies residues 364–385 (MPYISIVCIIVYVIGHAIGPAI). His379 provides a ligand contact to D-fructose. The Cytoplasmic segment spans residues 386–402 (RSLYTEIFLQSGRPPTW). A helical membrane pass occupies residues 403 to 421 (WGQVHWLSNFTVGLVFPLI). 407 to 408 (HW) is a binding site for D-fructose. The Extracellular portion of the chain corresponds to 422–426 (QWAGL). Residues 427 to 447 (YSFIIFGVACLSTTVYTFLIV) traverse the membrane as a helical segment. Residues 448 to 486 (PETKGKSFIEIIRRFIRMNKVEVSPDREELKDFPPDVSE) lie on the Cytoplasmic side of the membrane.

Belongs to the major facilitator superfamily. Sugar transporter (TC 2.A.1.1) family. Glucose transporter subfamily. Detected in jejunum. Detected at the intestinal brush-border membrane (at protein level). Detected in duodenum, jejunum and kidney.

The protein localises to the apical cell membrane. Its subcellular location is the cell membrane. It localises to the sarcolemma. It carries out the reaction D-fructose(out) = D-fructose(in). Functionally, functions as a fructose transporter that has only low activity with other monosaccharides. Can mediate the uptake of deoxyglucose, but with low efficiency. Essential for fructose uptake in the small intestine. Plays a role in the regulation of salt uptake and blood pressure in response to dietary fructose. Required for the development of high blood pressure in response to high dietary fructose intake. The chain is Solute carrier family 2, facilitated glucose transporter member 5 from Oryctolagus cuniculus (Rabbit).